The chain runs to 62 residues: MARYRHSRSRSRSRYRRRRRRRRSRYRSRRRRYRRSRRRRRRGRRRRGYSRRRYSRRGRRRY.

The segment at 1-62 (MARYRHSRSR…RYSRRGRRRY (62 aa)) is disordered.

Belongs to the protamine P1 family. As to expression, testis.

The protein resides in the nucleus. It is found in the chromosome. Functionally, protamines substitute for histones in the chromatin of sperm during the haploid phase of spermatogenesis. They compact sperm DNA into a highly condensed, stable and inactive complex. This is Sperm protamine P1 (PRM1) from Trichosurus vulpecula (Brush-tailed possum).